A 119-amino-acid polypeptide reads, in one-letter code: Large ribosomal subunit protein uL14 (119 aa).

It belongs to the universal ribosomal protein uL14 family. In terms of assembly, part of the 50S ribosomal subunit. Forms a cluster with proteins L3 and L19. In the 70S ribosome, L14 and L19 interact and together make contacts with the 16S rRNA in bridges B5 and B8.

Its function is as follows. Binds to 23S rRNA. Forms part of two intersubunit bridges in the 70S ribosome. This chain is Large ribosomal subunit protein uL14, found in Wolbachia sp. subsp. Brugia malayi (strain TRS).